Reading from the N-terminus, the 208-residue chain is Proheparin-binding EGF-like growth factor (208 aa).

Residues 1–19 (MKLLPSVVLKLLLAAVLSA) form the signal peptide. A propeptide spanning residues 20-62 (LVTGESLEQLRRGLAAGTSNPDPSTGSTDQLLRLGGGRDRKVR) is cleaved from the precursor. The Extracellular portion of the chain corresponds to 20-160 (LVTGESLEQL…ENRLYTYDHT (141 aa)). The segment at 34–55 (AAGTSNPDPSTGSTDQLLRLGG) is disordered. The segment covering 36–49 (GTSNPDPSTGSTDQ) has biased composition (polar residues). Thr75 and Thr85 each carry an O-linked (GalNAc...) threonine glycan. The tract at residues 81 to 104 (QALATPSKEEHGKRKKKGKGLGKK) is disordered. A compositionally biased stretch (basic residues) spans 93-102 (KRKKKGKGLG). In terms of domain architecture, EGF-like spans 104–144 (KRDPCLRKYKDFCIHGECKYVKELRAPSCICHPGYHGERCH). Intrachain disulfides connect Cys108–Cys121, Cys116–Cys132, and Cys134–Cys143. Positions 136–148 (PGYHGERCHGLSL) are toxin-binding domain. Positions 149-208 (PVENRLYTYDHTTILAVVAVVLSSVCLLVIVGLLMFRYHRRGGYDVENEEKVKLGMTNSH) are cleaved as a propeptide — C-terminal. A helical membrane pass occupies residues 161-184 (TILAVVAVVLSSVCLLVIVGLLMF). Residues 185–208 (RYHRRGGYDVENEEKVKLGMTNSH) lie on the Cytoplasmic side of the membrane.

In terms of assembly, interacts with EGFR and ERBB4. Interacts with FBLN1. Post-translationally, O-glycosylated.

The protein localises to the secreted. Its subcellular location is the extracellular space. It is found in the cell membrane. Growth factor that mediates its effects via EGFR, ERBB2 and ERBB4. Required for normal cardiac valve formation and normal heart function. Promotes smooth muscle cell proliferation. May be involved in macrophage-mediated cellular proliferation. It is mitogenic for fibroblasts, but not endothelial cells. It is able to bind EGF receptor/EGFR with higher affinity than EGF itself and is a far more potent mitogen for smooth muscle cells than EGF. Also acts as a diphtheria toxin receptor. The chain is Proheparin-binding EGF-like growth factor (HBEGF) from Chlorocebus aethiops (Green monkey).